We begin with the raw amino-acid sequence, 174 residues long: Large ribosomal subunit protein uL6 (174 aa).

It belongs to the universal ribosomal protein uL6 family. In terms of assembly, part of the 50S ribosomal subunit.

Its function is as follows. This protein binds to the 23S rRNA, and is important in its secondary structure. It is located near the subunit interface in the base of the L7/L12 stalk, and near the tRNA binding site of the peptidyltransferase center. This is Large ribosomal subunit protein uL6 from Stenotrophomonas maltophilia (strain R551-3).